A 374-amino-acid polypeptide reads, in one-letter code: Putative F-box protein At3g16590 (374 aa).

The 45-residue stretch at 1-45 (MPTKLPLELEDEILLRVPPLSLTRFRTVCKRWNTLFNDQRFINNH) folds into the F-box domain.

The protein is Putative F-box protein At3g16590 of Arabidopsis thaliana (Mouse-ear cress).